Reading from the N-terminus, the 396-residue chain is Elongation factor Tu (396 aa).

The region spanning 10–205 (KSHANIGTIG…AVDEYIPTPE (196 aa)) is the tr-type G domain. Residues 19-26 (GHVDHGKT) form a G1 region. GTP is bound at residue 19–26 (GHVDHGKT). Thr-26 provides a ligand contact to Mg(2+). Residues 61–65 (GITIS) form a G2 region. A G3 region spans residues 82 to 85 (DCPG). GTP-binding positions include 82–86 (DCPGH) and 137–140 (NKCD). The interval 137–140 (NKCD) is G4. A G5 region spans residues 175-177 (SAL).

It belongs to the TRAFAC class translation factor GTPase superfamily. Classic translation factor GTPase family. EF-Tu/EF-1A subfamily. Monomer.

The protein resides in the cytoplasm. The enzyme catalyses GTP + H2O = GDP + phosphate + H(+). In terms of biological role, GTP hydrolase that promotes the GTP-dependent binding of aminoacyl-tRNA to the A-site of ribosomes during protein biosynthesis. The chain is Elongation factor Tu from Bacillus pumilus (strain SAFR-032).